The chain runs to 53 residues: Ferredoxin B (53 aa).

The N-terminal extension stretch occupies residues 1–35 (GIDPNYRSLPVVKEEQGVKIYGTYEPPTKLGIWGT). Lysine 29 carries the N6-methyllysine modification. A 4Fe-4S ferredoxin-type 1 domain is found at 34–53 (GTIVGVDFDLCIADGSCINA). [3Fe-4S] cluster is bound by residues cysteine 44 and cysteine 50.

It depends on [3Fe-4S] cluster as a cofactor. [4Fe-4S] cluster serves as cofactor.

Ferredoxins are iron-sulfur proteins that transfer electrons in a wide variety of metabolic reactions. In Sulfuracidifex metallicus (Sulfolobus metallicus), this protein is Ferredoxin B.